A 705-amino-acid chain; its full sequence is MKYNKLSVAVAAFAFAAVSAQNSNVLKYPETKKVSHTDTYFGTQVSDPYRWLEDDRAEDTKAWVQQEVKFTQDYLAQIPFRDQLKKQLMDIWNYEKISAPFKKGKYTYFSKNDGLQAQSVLYRKDAAGKTEVFLDPNKFSEKGTTSLASVSFNKKGTLVAYSISEGGSDWNKIIILDAETKKQLDETLLDVKFSGISWLGDEGFFYSSYDKPKEGSVLSGMTDKHKVYFHKLGTKQSQDELIIGGDKFPRRYIGAYVTDDQRYLVVSAANATNGNELYIKDLKNKTDFIPIITGFDSNVNVADTDGDTLYLFTDKDAPNKRLVKTTIQNPKAETWKDVIAETSEPLEINTGGGYFFATYMKDAIDQVKQYDKNGKLVRAIKLPGSGNASGFGGEKTEKDLYYSFTNYITPPTIFKYNVTTGNSEVYQKPKVKFNPENYVSEQVFYTSSDGTKIPMMISYKKGLKKDGKNPTILYSYGGFNISLQPAFSVVNAIWMENGGIYAVPNIRGGGEYGKKWHDAGTKMQKKNVFNDFIAAGEYLQKNGYTSKEYMALSGRSNGGLLVGATMTMRPDLAKVAFPGVGVLDMLRYNKFTAGAGWAYDYGTAEDSKEMFEYLKSYSPVHNVKAGTCYPSTMVITSDHDDRVVPAHSFKFGSELQAKQSCKNPILIRIETNAGHGAGRSTEQVVAENADLLSFALYEMGIKSLK.

The first 20 residues, 1 to 20 (MKYNKLSVAVAAFAFAAVSA), serve as a signal peptide directing secretion. Residues S556 and H675 each act as charge relay system in the active site.

This sequence belongs to the peptidase S9A family. As to quaternary structure, monomer.

The protein localises to the periplasm. The catalysed reaction is Hydrolysis of Pro-|-Xaa &gt;&gt; Ala-|-Xaa in oligopeptides.. Its function is as follows. Cleaves peptide bonds on the C-terminal side of prolyl residues within peptides that are up to approximately 30 amino acids long. Has an absolute requirement for an X-Pro bond in the trans configuration immediately preceding the Pro-Y scissible bond. This is Prolyl endopeptidase (f1pep1) from Elizabethkingia meningoseptica (Chryseobacterium meningosepticum).